The following is a 709-amino-acid chain: Protein transport protein SEC39 (709 aa).

The protein belongs to the SEC39 family. Component of a peripheral membrane protein complex consisting of DSL1, SEC39/DSL3 and TIP20. Bound to a SNARE complex consisting of UFE1, USE1, SEC20 and SEC22 or YKT6 through direct interaction of TIP20 with SEC20. Interacts with TIP20 and DSL1.

It localises to the endoplasmic reticulum membrane. Its function is as follows. Required for protein transport between the Golgi and the endoplasmic reticulum. May contribute to tethering of coatomer-coated retrograde transport vesicles to the ER membrane through interaction with and stabilization of the SNARE complex. The polypeptide is Protein transport protein SEC39 (Saccharomyces cerevisiae (strain ATCC 204508 / S288c) (Baker's yeast)).